Consider the following 1291-residue polypeptide: 1-phosphatidylinositol 4,5-bisphosphate phosphodiesterase gamma-1 (1291 aa).

Alanine 2 is modified (N-acetylalanine). The PH 1 domain occupies 27–142 (RSLEVGTVMT…WIRGLTWLME (116 aa)). Residues 152–187 (QIERWLRKQFYSVDRNREDRISAKDLKNMLSQVNYR) form the EF-hand domain. Aspartate 165, asparagine 167, glutamate 169, arginine 171, and aspartate 176 together coordinate Ca(2+). The PI-PLC X-box domain occupies 320-464 (DTMNNPLSHY…LKRKILIKHK (145 aa)). Residues histidine 335 and histidine 380 contribute to the active site. The region spanning 489 to 523 (SIKNGILYLEDPVNHEWYPHYFVLTSSKIYYSEET) is the PH 2; first part domain. Tyrosine 506 is modified (phosphotyrosine). A disordered region spans residues 522 to 544 (ETSSDQGNEDEEEPKEASGSTEL). SH2 domains lie at 550-657 (WFHG…SEPV) and 668-756 (WYHA…RYPI). Phosphotyrosine; by SYK is present on tyrosine 771. 2 positions are modified to phosphotyrosine: tyrosine 775 and tyrosine 783. The residue at position 783 (tyrosine 783) is a Phosphotyrosine; by ITK, SYK and TXK. The SH3 domain maps to 791–851 (TFKCAVKALF…PSNYVEEMVS (61 aa)). One can recognise a PH 2; second part domain in the interval 895 to 931 (FVFSISMASVAHWSLDVAADSQEELQDWVKKIREVAQ). One can recognise a PI-PLC Y-box domain in the interval 953–1070 (LSELVVYCRP…GYVLQPSVMR (118 aa)). Tyrosine 977 is subject to Phosphotyrosine. The C2 domain maps to 1071 to 1194 (DEAFDPFDKS…TGYRAVPLKN (124 aa)). 3 positions are modified to phosphoserine: serine 1222, serine 1228, and serine 1249. Tyrosine 1254 bears the Phosphotyrosine mark. Serine 1264 carries the post-translational modification Phosphoserine. The segment at 1271–1291 (HFDGRDRRTPRRTRVNGDNRL) is disordered.

Interacts with AGAP2 via its SH3 domain. Interacts (via SH2 domain) with RET. Interacts with FLT1 (tyrosine-phosphorylated). Interacts (via SH2 domain) with FGFR1, FGFR2, FGFR3 and FGFR4 (phosphorylated). Interacts with LAT (phosphorylated) upon TCR activation. Interacts (via SH3 domain) with the Pro-rich domain of TNK1. Associates with BLNK, VAV1, GRB2 and NCK1 in a B-cell antigen receptor-dependent fashion. Interacts with CBLB in activated T-cells; which inhibits phosphorylation. Interacts with SHB. Interacts (via SH3 domain) with the Arg/Gly-rich-flanked Pro-rich domains of KHDRBS1/SAM68. This interaction is selectively regulated by arginine methylation of KHDRBS1/SAM68. Interacts with INPP5D/SHIP1, THEMIS and CLNK. Interacts with AXL, FLT4 and KIT. Interacts with RALGPS1. Interacts (via the SH2 domains) with VIL1 (phosphorylated at C-terminus tyrosine phosphorylation sites). Interacts (via SH2 domain) with PDGFRA and PDGFRB (tyrosine phosphorylated). Interacts with PIP5K1C. Interacts with NTRK1 and NTRK2 (phosphorylated upon ligand-binding). Interacts with SYK; activates PLCG1. Interacts with GRB2, LAT and THEMIS upon TCR activation in thymocytes. Interacts with TESPA1; the association is increased with prolonged stimulation of the TCR and may facilitate the assembly of the LAT signalosome. Interacts (via C-terminal proline-rich domain (PRD)) with PLCG1 (via SH3 domain); this interaction leads to guanine nucleotide exchange from PlCG1 to DNM1 and enhances DNM1-dependent endocytosis. Requires Ca(2+) as cofactor. Ubiquitinated by CBLB in activated T-cells. Post-translationally, tyrosine phosphorylated in response to signaling via activated FLT3, KIT and PDGFRA. Tyrosine phosphorylated by activated FGFR1, FGFR2, FGFR3 and FGFR4. Tyrosine phosphorylated by activated FLT1 and KDR. Tyrosine phosphorylated by activated PDGFRB. The receptor-mediated activation of PLCG1 involves its phosphorylation by tyrosine kinases, in response to ligation of a variety of growth factor receptors and immune system receptors. For instance, SYK phosphorylates and activates PLCG1 in response to ligation of the B-cell receptor. May be dephosphorylated by PTPRJ. Phosphorylated by ITK and TXK on Tyr-783 upon TCR activation in T-cells.

It localises to the cell projection. It is found in the lamellipodium. Its subcellular location is the ruffle. It catalyses the reaction a 1,2-diacyl-sn-glycero-3-phospho-(1D-myo-inositol-4,5-bisphosphate) + H2O = 1D-myo-inositol 1,4,5-trisphosphate + a 1,2-diacyl-sn-glycerol + H(+). It carries out the reaction a 1,2-diacyl-sn-glycero-3-phospho-(1D-myo-inositol) + H2O = 1D-myo-inositol 1-phosphate + a 1,2-diacyl-sn-glycerol + H(+). With respect to regulation, activated by phosphorylation on tyrosine residues. In terms of biological role, mediates the production of the second messenger molecules diacylglycerol (DAG) and inositol 1,4,5-trisphosphate (IP3). Plays an important role in the regulation of intracellular signaling cascades. Becomes activated in response to ligand-mediated activation of receptor-type tyrosine kinases, such as PDGFRA, PDGFRB, EGFR, FGFR1, FGFR2, FGFR3 and FGFR4. Plays a role in actin reorganization and cell migration. Guanine nucleotide exchange factor that binds the GTPase DNM1 and catalyzes the dissociation of GDP, allowing a GTP molecule to bind in its place, therefore enhancing DNM1-dependent endocytosis. The polypeptide is 1-phosphatidylinositol 4,5-bisphosphate phosphodiesterase gamma-1 (Bos taurus (Bovine)).